The following is a 448-amino-acid chain: Cytoplasmic tRNA 2-thiolation protein 2 (448 aa).

The protein belongs to the CTU2/NCS2 family.

Its subcellular location is the cytoplasm. Its pathway is tRNA modification; 5-methoxycarbonylmethyl-2-thiouridine-tRNA biosynthesis. Plays a central role in 2-thiolation of mcm(5)S(2)U at tRNA wobble positions of tRNA(Lys), tRNA(Glu) and tRNA(Gln). May act by forming a heterodimer with NCS6 that ligates sulfur from thiocarboxylated URM1 onto the uridine of tRNAs at wobble position. Prior mcm(5) tRNA modification by the elongator complex is required for 2-thiolation. May also be involved in protein urmylation. The sequence is that of Cytoplasmic tRNA 2-thiolation protein 2 from Scheffersomyces stipitis (strain ATCC 58785 / CBS 6054 / NBRC 10063 / NRRL Y-11545) (Yeast).